Here is a 504-residue protein sequence, read N- to C-terminus: Protein Dok-7 (504 aa).

A PH domain is found at 4–109 (AALVEGQVKL…WDARIRYALG (106 aa)). The 106-residue stretch at 105–210 (RYALGEVHRF…RGISPTKGPF (106 aa)) folds into the IRS-type PTB domain. 3 disordered regions span residues 210–229 (FGLRPVLPDPSPPGPSTVEE), 249–351 (SHAG…YSSS), and 411–483 (LCLA…PHAG). 2 stretches are compositionally biased toward low complexity: residues 263–279 (LSSSSSEASHLDVSASS) and 288–310 (SSSSASTSQEGPRPAAAQAAGEA). Polar residues predominate over residues 331-341 (GRQSSSDSGIA).

As to quaternary structure, homodimer. Forms a heterotetramer composed of 2 DOK7 and 2 MUSK molecules which facilitates MUSK trans-autophosphorylation on tyrosine residue and activation. Interacts (via IRS-type PTB domain) with MUSK (via cytoplasmic part); requires MUSK phosphorylation. As to expression, preferentially expressed in skeletal muscle and heart. Present in thigh muscle, diaphragm and heart but not in the liver or spleen (at protein level).

The protein localises to the cell membrane. It localises to the synapse. Functionally, probable muscle-intrinsic activator of MUSK that plays an essential role in neuromuscular synaptogenesis. Acts in aneural activation of MUSK and subsequent acetylcholine receptor (AchR) clustering in myotubes. Induces autophosphorylation of MUSK. This chain is Protein Dok-7 (DOK7), found in Homo sapiens (Human).